Here is a 660-residue protein sequence, read N- to C-terminus: DNA mismatch repair protein MutL (660 aa).

Disordered regions lie at residues 368–426 (PQQT…PTKK) and 439–461 (NREQ…STQQ). Residues 406–417 (SSSSNSTAPSRS) show a composition bias toward low complexity.

This sequence belongs to the DNA mismatch repair MutL/HexB family.

This protein is involved in the repair of mismatches in DNA. It is required for dam-dependent methyl-directed DNA mismatch repair. May act as a 'molecular matchmaker', a protein that promotes the formation of a stable complex between two or more DNA-binding proteins in an ATP-dependent manner without itself being part of a final effector complex. This Aliivibrio fischeri (strain ATCC 700601 / ES114) (Vibrio fischeri) protein is DNA mismatch repair protein MutL.